The primary structure comprises 432 residues: Keratin, type I cytoskeletal 17 (432 aa).

Residues methionine 1–serine 24 are disordered. The head stretch occupies residues methionine 1–glycine 83. Serine 12 and serine 13 each carry phosphoserine. Lysine 15 participates in a covalent cross-link: Glycyl lysine isopeptide (Lys-Gly) (interchain with G-Cter in SUMO1); alternate. Residue lysine 15 forms a Glycyl lysine isopeptide (Lys-Gly) (interchain with G-Cter in SUMO2); alternate linkage. Phosphoserine is present on residues serine 25, serine 32, and serine 39. Serine 44 carries the phosphoserine; by RPS6KA1 modification. The tract at residues glutamate 84–tyrosine 120 is coil 1A. The IF rod domain maps to glutamate 84–leucine 395. A Phosphothreonine modification is found at threonine 110. The tract at residues glutamine 121 to isoleucine 138 is linker 1. Residues glutamate 139–arginine 230 are coil 1B. A linker 12 region spans residues glycine 231–serine 250. A coil 2 region spans residues arginine 251 to aspartate 392. Lysine 278 is covalently cross-linked (Glycyl lysine isopeptide (Lys-Gly) (interchain with G-Cter in SUMO2)). Threonine 279 carries the phosphothreonine modification. A Phosphoserine modification is found at serine 323. Residues alanine 393–arginine 432 are tail. Residues lysine 399, lysine 400, and lysine 419 each participate in a glycyl lysine isopeptide (Lys-Gly) (interchain with G-Cter in SUMO1); alternate cross-link. Glycyl lysine isopeptide (Lys-Gly) (interchain with G-Cter in SUMO2); alternate cross-links involve residues lysine 399, lysine 400, and lysine 419.

The protein belongs to the intermediate filament family. As to quaternary structure, heterodimer of a type I and a type II keratin. KRT17 associates with KRT6 isomers (KRT6A or KRT6B). Interacts with TRADD and SFN. In terms of processing, phosphorylation at Ser-44 occurs in a growth- and stress-dependent fashion in skin keratinocytes, it has no effect on filament organization.

It localises to the cytoplasm. Its function is as follows. Type I keratin involved in the formation and maintenance of various skin appendages, specifically in determining shape and orientation of hair. Required for the correct growth of hair follicles, in particular for the persistence of the anagen (growth) state. Modulates the function of TNF-alpha in the specific context of hair cycling. Regulates protein synthesis and epithelial cell growth through binding to the adapter protein SFN and by stimulating Akt/mTOR pathway. Involved in tissue repair. May be a marker of basal cell differentiation in complex epithelia and therefore indicative of a certain type of epithelial 'stem cells'. Acts as a promoter of epithelial proliferation by acting a regulator of immune response in skin: promotes Th1/Th17-dominated immune environment contributing to the development of basaloid skin tumors. May act as an autoantigen in the immunopathogenesis of psoriasis, with certain peptide regions being a major target for autoreactive T-cells and hence causing their proliferation. The protein is Keratin, type I cytoskeletal 17 of Pan troglodytes (Chimpanzee).